A 363-amino-acid chain; its full sequence is Aminopyrrolnitrin oxygenase PrnD (363 aa).

The 109-residue stretch at Trp29–Val137 folds into the Rieske domain. [2Fe-2S] cluster is bound by residues Cys69, His71, Cys88, and His91.

Homodimer. [2Fe-2S] cluster is required as a cofactor. Fe cation serves as cofactor. The cofactor is FMN.

It catalyses the reaction aminopyrrolnitrin + NADPH + 2 O2 + H(+) = pyrrolnitrin + NADP(+) + 2 H2O. Its pathway is antibiotic biosynthesis. Functionally, involved in the biosynthesis of the antifungal antibiotic pyrrolnitrin (PRN). Catalyzes the oxidation of the amino group of aminopyrrolnitrin (APRN) to a nitro group to form PRN. It has high substrate specificity toward physiological substrate aminopyrrolnitrin, p-aminobenzylamine (pABA), p-aminobenzyl alcohol, and p-aminophenyl alanine. The polypeptide is Aminopyrrolnitrin oxygenase PrnD (prnD) (Pseudomonas fluorescens).